The primary structure comprises 833 residues: Zinc transporter ZIP10 (833 aa).

The first 25 residues, 1 to 25 (MKVHIHTKFCLICLLTFIFHHCNHC), serve as a signal peptide directing secretion. Positions 30-48 (DHGPEELHRHHRGMTESES) are enriched in basic and acidic residues. 2 disordered regions span residues 30-54 (DHGP…FSVQ) and 137-167 (AENH…IKAD). Residues 137–147 (AENHTTTSVTS) show a composition bias toward polar residues. Residues 152-167 (KCDPEKEAAELPIKAD) show a composition bias toward basic and acidic residues. N-linked (GlcNAc...) asparagine glycosylation is found at Asn191 and Asn198. Over residues 200–209 (SVAHSEHGEP) the composition is skewed to basic and acidic residues. Disordered stretches follow at residues 200–257 (SVAH…NHDH) and 271–335 (RVHS…EDDR). A glycan (N-linked (GlcNAc...) asparagine) is linked at Asn218. Over residues 229–241 (VKVRRKEKGKRKK) the composition is skewed to basic residues. Composition is skewed to basic and acidic residues over residues 281–315 (HLPE…EAPH) and 326–335 (SHKDQSEDDR). N-linked (GlcNAc...) asparagine glycosylation occurs at Asn341. Helical transmembrane passes span 413–433 (IISI…VPII) and 440–460 (FLLT…ALLH). The interval 466 to 485 (QGGHDHSHQHTHGHGHSHGH) is disordered. A helical membrane pass occupies residues 497 to 517 (VLKGLVALGGIYLLFIIEHCI). Phosphothreonine is present on residues Thr538 and Thr555. At Ser593 the chain carries Phosphoserine. Helical transmembrane passes span 689 to 709 (AIGA…IAVF), 734 to 754 (IVYN…GTAV), 761 to 781 (ITLW…LVDM), and 803 to 823 (FILQ…IALY).

The protein belongs to the ZIP transporter (TC 2.A.5) family. Interacts with SLC39A6. This interaction triggers cells to undergo EMT and mitosis. Found in a complex with SLC39A6, SLC39A10 and with the 'Ser-727' phosphorylated form of STAT3 throughout mitosis. Found in a complex with SLC39A6, SLC39A10 and with NCAM1; this complex controls NCAM1 phosphorylation and integration into focal adhesion complexes during epithelial-tomesenchymal transition. Found in a complex with SLC39A6, SLC39A10 and with GSK3B that controls NCAM1 phosphorylation. Undergoes N-terminal ectodomain shedding. In terms of tissue distribution, expressed in the liver, kidney and brain.

The protein resides in the cell membrane. Its subcellular location is the apical cell membrane. The enzyme catalyses Zn(2+)(in) = Zn(2+)(out). Functionally, zinc-influx transporter. When associated with SLC39A6, the heterodimer formed by SLC39A10 and SLC39A6 mediates cellular zinc uptake to trigger cells to undergo epithelial-to-mesenchymal transition (EMT). mediates cellular zinc uptake to trigger cells to undergo epithelial-to-mesenchymal transition (EMT). SLC39A10-SLC39A6 heterodimers play also an essentiel role in initiating mitosis by importing zinc into cells to initiate a pathway resulting in the onset of mitosis. Plays an important for both mature B-cell maintenance and humoral immune responses. When associated with SLC39A10, the heterodimer controls NCAM1 phosphorylation and integration into focal adhesion complexes during EMT. This Mus musculus (Mouse) protein is Zinc transporter ZIP10.